The chain runs to 432 residues: Adenosylmethionine-8-amino-7-oxononanoate aminotransferase (432 aa).

Residue tryptophan 52 coordinates substrate. Residue 112 to 113 (GS) coordinates pyridoxal 5'-phosphate. Tyrosine 144 provides a ligand contact to substrate. Aspartate 245 contributes to the pyridoxal 5'-phosphate binding site. Positions 274 and 307 each coordinate substrate. At lysine 274 the chain carries N6-(pyridoxal phosphate)lysine. Residue 308–309 (PT) coordinates pyridoxal 5'-phosphate. A substrate-binding site is contributed by arginine 391.

This sequence belongs to the class-III pyridoxal-phosphate-dependent aminotransferase family. BioA subfamily. Homodimer. Pyridoxal 5'-phosphate serves as cofactor.

Its subcellular location is the cytoplasm. It catalyses the reaction (8S)-8-amino-7-oxononanoate + S-adenosyl-L-methionine = S-adenosyl-4-methylsulfanyl-2-oxobutanoate + (7R,8S)-7,8-diammoniononanoate. Its pathway is cofactor biosynthesis; biotin biosynthesis; 7,8-diaminononanoate from 8-amino-7-oxononanoate (SAM route): step 1/1. In terms of biological role, catalyzes the transfer of the alpha-amino group from S-adenosyl-L-methionine (SAM) to 7-keto-8-aminopelargonic acid (KAPA) to form 7,8-diaminopelargonic acid (DAPA). It is the only aminotransferase known to utilize SAM as an amino donor. The protein is Adenosylmethionine-8-amino-7-oxononanoate aminotransferase of Buchnera aphidicola subsp. Schizaphis graminum (strain Sg).